A 492-amino-acid chain; its full sequence is Catalase (492 aa).

Residues H65 and N138 contribute to the active site. Y348 is a heme binding site.

Belongs to the catalase family. In terms of assembly, homotetramer. Requires heme as cofactor.

It is found in the cytoplasm. The protein resides in the cytosol. Its subcellular location is the peroxisome matrix. The catalysed reaction is 2 H2O2 = O2 + 2 H2O. Catalyzes the degradation of hydrogen peroxide (H(2)O(2)) generated by peroxisomal oxidases to water and oxygen, thereby protecting cells from the toxic effects of hydrogen peroxide. The sequence is that of Catalase from Soldanella alpina (Alpine snowbell).